Here is a 356-residue protein sequence, read N- to C-terminus: DNA polymerase IV (356 aa).

The UmuC domain maps to 4 to 185; sequence IIHIDMDCYY…LALGKIPGVG (182 aa). The Mg(2+) site is built by Asp8 and Asp103. Glu104 is an active-site residue.

The protein belongs to the DNA polymerase type-Y family. As to quaternary structure, monomer. The cofactor is Mg(2+).

The protein localises to the cytoplasm. It carries out the reaction DNA(n) + a 2'-deoxyribonucleoside 5'-triphosphate = DNA(n+1) + diphosphate. Functionally, poorly processive, error-prone DNA polymerase involved in untargeted mutagenesis. Copies undamaged DNA at stalled replication forks, which arise in vivo from mismatched or misaligned primer ends. These misaligned primers can be extended by PolIV. Exhibits no 3'-5' exonuclease (proofreading) activity. May be involved in translesional synthesis, in conjunction with the beta clamp from PolIII. The sequence is that of DNA polymerase IV from Pseudoalteromonas atlantica (strain T6c / ATCC BAA-1087).